The following is a 150-amino-acid chain: Large ribosomal subunit protein bL9 (150 aa).

Belongs to the bacterial ribosomal protein bL9 family.

Its function is as follows. Binds to the 23S rRNA. This Paraburkholderia phytofirmans (strain DSM 17436 / LMG 22146 / PsJN) (Burkholderia phytofirmans) protein is Large ribosomal subunit protein bL9.